A 334-amino-acid polypeptide reads, in one-letter code: Ornithine carbamoyltransferase (334 aa).

Carbamoyl phosphate-binding positions include 57 to 60, Gln-84, Arg-108, and 135 to 138; these read STRT and HPTQ. Residues Asn-169, Asp-233, and 237 to 238 contribute to the L-ornithine site; that span reads SM. Carbamoyl phosphate contacts are provided by residues 275–276 and Arg-320; that span reads CL.

Belongs to the aspartate/ornithine carbamoyltransferase superfamily. OTCase family.

The protein localises to the cytoplasm. It catalyses the reaction carbamoyl phosphate + L-ornithine = L-citrulline + phosphate + H(+). It participates in amino-acid biosynthesis; L-arginine biosynthesis; L-arginine from L-ornithine and carbamoyl phosphate: step 1/3. Its function is as follows. Reversibly catalyzes the transfer of the carbamoyl group from carbamoyl phosphate (CP) to the N(epsilon) atom of ornithine (ORN) to produce L-citrulline. This chain is Ornithine carbamoyltransferase, found in Vibrio cholerae serotype O1 (strain ATCC 39315 / El Tor Inaba N16961).